The primary structure comprises 239 residues: MATTWPPRTVIRKSSGLRTLESALQRSGLGPVAGVDEVGRGACAGPLVVAACALGPNRYESLAALDDSKKLTEKTREKLFPLICRYALAYHVVFIPSVEVDRRGVHVANIEGMRRAVAGLSVRPGYVLSDGFRVPGLSVPSLPVIGGDAAAACIAAASVLAKVSRDRLMVAMDTQYPGYGFAEHKGYSTRAHTLALTQLGPCPEHRRSFINVRRVATRSNGAATAEREADPPQERDGTG.

One can recognise an RNase H type-2 domain in the interval 30 to 221 (GPVAGVDEVG…VRRVATRSNG (192 aa)). Residues D36, E37, and D130 each coordinate a divalent metal cation. Residues 217-239 (TRSNGAATAEREADPPQERDGTG) form a disordered region. Over residues 225–239 (AEREADPPQERDGTG) the composition is skewed to basic and acidic residues.

This sequence belongs to the RNase HII family. The cofactor is Mn(2+). Requires Mg(2+) as cofactor.

The protein resides in the cytoplasm. It catalyses the reaction Endonucleolytic cleavage to 5'-phosphomonoester.. Functionally, endonuclease that specifically degrades the RNA of RNA-DNA hybrids. In Mycobacterium ulcerans (strain Agy99), this protein is Ribonuclease HII.